The sequence spans 553 residues: MTKYVFVTGGVVSSLGKGIAAASLAAILESRGLKVTLLKLDPYINVDPGTMSPFQHGEVFVTEDGAETDLDLGHYERFISTKMRKANNFTTGQIYESVIRKERRGDYLGKTVQVIPHITNEIQAFVERGAASATCGEPDVAIVEVGGTVGDIESLPFLEAARQMSLRLGRNSACFVHLTLVPFIATAGELKTKPTQHSVQKLREIGIYPNVLLCRADRRIPDDERAKISMFSNVPEDAVISVWDVDSIYKIPQMLHDQGLDELICEELKLTARPADLSIWSEMVEKLENPKSEVTIGMVGKYVELTESYKSLIEALRHASIHTSTKVNIEYIDSEELEENGVDSLKHLDAVLVPGGFGRRGTEGKIKAIRYAREAKVPYLGICLGMQLAVIEFARDVVGLKDANSTEFDQDTPNRVVALITEWYDREGKVEKRTEESDLGGTMRLGSQRCPIKPGTMAEEIYGKDVNERHRHRYEVNNRFVPQLEGGGLIISARTPSEDLPEMMELPRSMHPWFVGVQFHPEFTSTPRDGHPLFKAFVEAARAHHEASVEEKV.

An amidoligase domain region spans residues 1–270; it reads MTKYVFVTGG…DELICEELKL (270 aa). Residue Ser-13 coordinates CTP. Residue Ser-13 coordinates UTP. Residues 14–19 and Asp-71 contribute to the ATP site; that span reads SLGKGI. Mg(2+) contacts are provided by Asp-71 and Glu-144. CTP contacts are provided by residues 151–153, 191–196, and Lys-227; these read DIE and KTKPTQ. Residues 191-196 and Lys-227 each bind UTP; that span reads KTKPTQ. Residues 295 to 547 enclose the Glutamine amidotransferase type-1 domain; it reads TIGMVGKYVE…VEAARAHHEA (253 aa). Gly-356 serves as a coordination point for L-glutamine. Residue Cys-383 is the Nucleophile; for glutamine hydrolysis of the active site. Residues 384 to 387, Glu-407, and Arg-473 contribute to the L-glutamine site; that span reads LGMQ. Active-site residues include His-520 and Glu-522.

The protein belongs to the CTP synthase family. Homotetramer.

It carries out the reaction UTP + L-glutamine + ATP + H2O = CTP + L-glutamate + ADP + phosphate + 2 H(+). It catalyses the reaction L-glutamine + H2O = L-glutamate + NH4(+). The enzyme catalyses UTP + NH4(+) + ATP = CTP + ADP + phosphate + 2 H(+). Its pathway is pyrimidine metabolism; CTP biosynthesis via de novo pathway; CTP from UDP: step 2/2. Allosterically activated by GTP, when glutamine is the substrate; GTP has no effect on the reaction when ammonia is the substrate. The allosteric effector GTP functions by stabilizing the protein conformation that binds the tetrahedral intermediate(s) formed during glutamine hydrolysis. Inhibited by the product CTP, via allosteric rather than competitive inhibition. Its function is as follows. Catalyzes the ATP-dependent amination of UTP to CTP with either L-glutamine or ammonia as the source of nitrogen. Regulates intracellular CTP levels through interactions with the four ribonucleotide triphosphates. This Paraburkholderia phymatum (strain DSM 17167 / CIP 108236 / LMG 21445 / STM815) (Burkholderia phymatum) protein is CTP synthase.